Consider the following 209-residue polypeptide: Orotate phosphoribosyltransferase (209 aa).

5-phospho-alpha-D-ribose 1-diphosphate-binding positions include R96, K100, H102, and 122-130; that span reads EDLISTGGS. An orotate-binding site is contributed by S126.

It belongs to the purine/pyrimidine phosphoribosyltransferase family. PyrE subfamily. As to quaternary structure, homodimer. Mg(2+) serves as cofactor.

It carries out the reaction orotidine 5'-phosphate + diphosphate = orotate + 5-phospho-alpha-D-ribose 1-diphosphate. Its pathway is pyrimidine metabolism; UMP biosynthesis via de novo pathway; UMP from orotate: step 1/2. In terms of biological role, catalyzes the transfer of a ribosyl phosphate group from 5-phosphoribose 1-diphosphate to orotate, leading to the formation of orotidine monophosphate (OMP). The chain is Orotate phosphoribosyltransferase from Streptococcus mutans serotype c (strain ATCC 700610 / UA159).